A 920-amino-acid chain; its full sequence is MAFTRKRQREQQLQLYSKERFSLLLLNLEEYYFEQHTAFHVQHQGSQEERKIRGSLKICSKSVIFEPDAISQPILKIPLRDCLKIGKHGENGANKHFAKAKSWGISLIFSQIYFIKEHNIVAPYKIERGKMEYVFELEVSGKVEDVVETLLQLHRASCLDKLGDQMAMITAILQSRLARTSFDKNRFQSVSEKLHMECKAEMVTPLVTNPGHVCITDTSLYFQPLNGYPKPVVQITLQDVRRIYKRRHGLMPLGLEVFCTDDDLCSDIYLKFYEPQDRDDLYFYIATYLEHHAAEHTAESYMLQWQRGHLSNYQYLLHLNNLADRSCNDLSQYPVFPWIISDYSSPELDLSNPATFRDLSKPVGALNAERLERLLTRYQEMPEPRFMYGSHYSSPGYVLFYLVRIAPEYMLCLQNGRFDNADRMFNSIAETWKNCLDGATDFKELIPEFYDEDVSFLVNSLKLDLGKRQGGQMVDDVDLPAWASSPQDFLQKNKDALESGYVSEHLHEWIDLIFGYKQKGSEAIGAHNVFHPLTYEGGVDLNSIEDPDEKVAMLTQILEFGQTPKQLFVTPHPRRITPKFKSLSQASSYNASLTDSPVSPGEESFEDLTEESRTLAWSNIAKLQLHEQYKIHKEAVTGIAVSCNGSSVFTTSQDSTLKMFSKESKMLQRSISFSNMALSSCLLLPGDTTVISSSWDNNVYFYSIAFGRRQDTLMGHDDAVSKICWHNDRLYSGSWDSTVKVWSGVPAEMPGTKRHQFDLLAELEHDVSVNTINLNAVSTLLVSGTKEGMVNIWDLTTATLLHQTSCHSGTVCDAAFSPDSRHILSTGVDGCLNVIDVQTGMLISSMASEEPQRCFVWDGNSVLSGSRSGELLVWDLLGAKVSERIQGHTGAVTCMWMNEQCSSIITGGEDRQIMFWKLQY.

One can recognise a GRAM domain in the interval 176–247 (RLARTSFDKN…QDVRRIYKRR (72 aa)). The 98-residue stretch at 189–286 (SVSEKLHMEC…DRDDLYFYIA (98 aa)) folds into the BEACH-type PH domain. The region spanning 290–575 (EHHAAEHTAE…QLFVTPHPRR (286 aa)) is the BEACH domain. 6 WD repeats span residues 631–661 (IHKE…KMFS), 673–703 (FSNM…YFYS), 715–743 (GHDD…KVWS), 764–794 (EHDV…NIWD), 806–836 (CHSG…NVID), and 887–917 (GHTG…MFWK).

Couples the p55 TNF-receptor (TNF-R55 / TNFR1) to neutral sphingomyelinase (N-SMASE). Specifically binds to the N-smase activation domain of TNF-R55. May regulate ceramide production by N-SMASE. This chain is Protein FAN (Nsmaf), found in Mus musculus (Mouse).